We begin with the raw amino-acid sequence, 219 residues long: 3-demethoxyubiquinol 3-hydroxylase (219 aa).

Residues 21-51 (RTLTPGTTQAERTPAHAAPAPDAPEAGTLPS) form a disordered region. A compositionally biased stretch (low complexity) spans 35 to 46 (AHAAPAPDAPEA). Fe cation contacts are provided by Glu68, Glu98, His101, Glu150, Glu182, and His185.

The protein belongs to the COQ7 family. Requires Fe cation as cofactor.

It localises to the cell membrane. It catalyses the reaction a 5-methoxy-2-methyl-3-(all-trans-polyprenyl)benzene-1,4-diol + AH2 + O2 = a 3-demethylubiquinol + A + H2O. The protein operates within cofactor biosynthesis; ubiquinone biosynthesis. Catalyzes the hydroxylation of 2-nonaprenyl-3-methyl-6-methoxy-1,4-benzoquinol during ubiquinone biosynthesis. This Alcanivorax borkumensis (strain ATCC 700651 / DSM 11573 / NCIMB 13689 / SK2) protein is 3-demethoxyubiquinol 3-hydroxylase.